The primary structure comprises 28 residues: 3,4-dihydroxybenzoate decarboxylase (28 aa).

In terms of assembly, homopentamer.

It carries out the reaction 3,4-dihydroxybenzoate + H(+) = catechol + CO2. Its activity is regulated as follows. Inhibited by oxygen. Completely inhibited by HgCl(2). Partially inhibited by ZnSO(4), 2,3,4-trihydroxybeonzoate and 3,4,5-trihydroxybeonzoate. Unaffected by KCl, MnCl(2) or EDTA. Not stimulated by thiamine phosphate, pyridoxal 5'-phosphate or biotin. Not inhibited by hydroxylamine, NaBH(4) or avidin. In terms of biological role, reversibly catalyzes the decarboxylation of 3,4-dihydroxybenzoate to catechol. Inactive toward 4-hydroxybenzoate and other benzoate derivatives. This is 3,4-dihydroxybenzoate decarboxylase from Sedimentibacter hydroxybenzoicus (Clostridium hydroxybenzoicum).